We begin with the raw amino-acid sequence, 130 residues long: Protein 7.7 (130 aa).

The polypeptide is Protein 7.7 (Escherichia phage T7 (Bacteriophage T7)).